The following is an 877-amino-acid chain: Bifunctional uridylyltransferase/uridylyl-removing enzyme (877 aa).

The uridylyltransferase stretch occupies residues M1–P335. Residues V336 to V695 are uridylyl-removing. The HD domain maps to V454 to L576. 2 consecutive ACT domains span residues E696–R778 and I805–Q877.

Belongs to the GlnD family. It depends on Mg(2+) as a cofactor.

The enzyme catalyses [protein-PII]-L-tyrosine + UTP = [protein-PII]-uridylyl-L-tyrosine + diphosphate. It catalyses the reaction [protein-PII]-uridylyl-L-tyrosine + H2O = [protein-PII]-L-tyrosine + UMP + H(+). Its activity is regulated as follows. Uridylyltransferase (UTase) activity is inhibited by glutamine, while glutamine activates uridylyl-removing (UR) activity. Functionally, modifies, by uridylylation and deuridylylation, the PII regulatory proteins (GlnB and homologs), in response to the nitrogen status of the cell that GlnD senses through the glutamine level. Under low glutamine levels, catalyzes the conversion of the PII proteins and UTP to PII-UMP and PPi, while under higher glutamine levels, GlnD hydrolyzes PII-UMP to PII and UMP (deuridylylation). Thus, controls uridylylation state and activity of the PII proteins, and plays an important role in the regulation of nitrogen fixation and metabolism. The sequence is that of Bifunctional uridylyltransferase/uridylyl-removing enzyme from Methylococcus capsulatus (strain ATCC 33009 / NCIMB 11132 / Bath).